The chain runs to 809 residues: Cyclic nucleotide-gated channel beta-3 (809 aa).

2 disordered regions span residues 1 to 121 (MFKS…PPAA) and 153 to 178 (GDLS…ESDD). Topologically, residues 1-218 (MFKSLTKVNK…SIDSYTDRLY (218 aa)) are cytoplasmic. The segment covering 22-31 (QSSRRNEEGS) has biased composition (basic and acidic residues). Residues 32–43 (HPSNQSQQTTAQ) are compositionally biased toward polar residues. Over residues 44–53 (EENKGEEKSL) the composition is skewed to basic and acidic residues. The segment covering 55–88 (TKSTPVTSEEPHTNIQDKLSKKNSSGDLTTNPDP) has biased composition (polar residues). A helical transmembrane segment spans residues 219–242 (LLWLLLVTLAYNWNCCFIPLRLVF). Over 243–249 (PYQTADN) the chain is Extracellular. The helical transmembrane segment at 250–270 (IHYWLIADIICDIIYLYDMLF) threads the bilayer. Topologically, residues 271 to 299 (IQPRLQFVRGGDIIVDSNELRKHYRTSTK) are cytoplasmic. A helical membrane pass occupies residues 300–317 (FQLDVASIIPFDICYLFF). Topologically, residues 318-320 (GFN) are extracellular. Residues 321-335 (PMFRANRMLKYTSFF) traverse the membrane as a helical segment. The Cytoplasmic portion of the chain corresponds to 336–348 (EFNHHLESIMDKA). An ion conduction pathway region spans residues 348-447 (AYIYRVIRTT…IGQMRDVIGA (100 aa)). A helical membrane pass occupies residues 349–371 (YIYRVIRTTGYLLFILHINACVY). At 372–393 (YWASNYEGIGTTRWVYDGEGNE) the chain is on the extracellular side. Helical transmembrane passes span 394 to 420 (YLRC…LFEI) and 421 to 445 (VFQL…RDVI). The segment at 407-410 (TIGG) is selectivity filter. Over 446-809 (GAATANQNYF…TIEVKEKAKQ (364 aa)) the chain is Cytoplasmic. Residues 450-526 (ANQNYFRACM…SIISKVDLFK (77 aa)) are C-linker. Residues 530-646 (TQMIYDMLLR…ILMKKARVLL (117 aa)) form a cyclic nucleotide-binding domain region. 3',5'-cyclic GMP-binding residues include G591, E592, R604, and T605. The segment at 698–776 (QAAQKKENSE…PHSVRRTVLP (79 aa)) is disordered. Basic and acidic residues predominate over residues 716–755 (NEDKQKENEDKQKENEDKGKENEDKDKGREPEEKPLDRPE).

Belongs to the cyclic nucleotide-gated cation channel (TC 1.A.1.5) family. CNGB3 subfamily. In terms of assembly, forms heterotetrameric channels composed of CNGA3 and CNGB3 subunits with 3:1 stoichiometry. In terms of tissue distribution, expressed specifically in the retina.

The protein localises to the cell membrane. The catalysed reaction is Ca(2+)(in) = Ca(2+)(out). It carries out the reaction Na(+)(in) = Na(+)(out). The enzyme catalyses K(+)(in) = K(+)(out). It catalyses the reaction NH4(+)(in) = NH4(+)(out). The catalysed reaction is Rb(+)(in) = Rb(+)(out). It carries out the reaction Li(+)(in) = Li(+)(out). The enzyme catalyses Cs(+)(in) = Cs(+)(out). Functionally, pore-forming subunit of the cone cyclic nucleotide-gated channel. Mediates cone photoresponses at bright light converting transient changes in intracellular cGMP levels into electrical signals. In the dark, cGMP levels are high and keep the channel open enabling a steady inward current carried by Na(+) and Ca(2+) ions that leads to membrane depolarization and neurotransmitter release from synaptic terminals. Upon photon absorption cGMP levels decline leading to channel closure and membrane hyperpolarization that ultimately slows neurotransmitter release and signals the presence of light, the end point of the phototransduction cascade. Conducts cGMP- and cAMP-gated ion currents, with permeability for monovalent and divalent cations. This Homo sapiens (Human) protein is Cyclic nucleotide-gated channel beta-3.